Reading from the N-terminus, the 584-residue chain is Sperm-associated microtubule inner protein 4 (584 aa).

It is found in the cytoplasm. Its subcellular location is the cytoskeleton. The protein resides in the microtubule organizing center. The protein localises to the centrosome. It localises to the flagellum axoneme. Microtubule inner protein (MIP) part of the dynein-decorated doublet microtubules (DMTs) in flagellum axoneme. May serve to reinforce and thus stabilize the microtubule structure in the sperm flagella. This is Sperm-associated microtubule inner protein 4 (SPMIP4) from Bos taurus (Bovine).